The chain runs to 418 residues: Serine hydroxymethyltransferase (418 aa).

(6S)-5,6,7,8-tetrahydrofolate-binding positions include L121 and 125-127 (GHL). K230 is subject to N6-(pyridoxal phosphate)lysine. Residues E246 and 355–357 (SPF) contribute to the (6S)-5,6,7,8-tetrahydrofolate site.

This sequence belongs to the SHMT family. In terms of assembly, homodimer. The cofactor is pyridoxal 5'-phosphate.

The protein localises to the cytoplasm. It carries out the reaction (6R)-5,10-methylene-5,6,7,8-tetrahydrofolate + glycine + H2O = (6S)-5,6,7,8-tetrahydrofolate + L-serine. It functions in the pathway one-carbon metabolism; tetrahydrofolate interconversion. It participates in amino-acid biosynthesis; glycine biosynthesis; glycine from L-serine: step 1/1. Functionally, catalyzes the reversible interconversion of serine and glycine with tetrahydrofolate (THF) serving as the one-carbon carrier. This reaction serves as the major source of one-carbon groups required for the biosynthesis of purines, thymidylate, methionine, and other important biomolecules. Also exhibits THF-independent aldolase activity toward beta-hydroxyamino acids, producing glycine and aldehydes, via a retro-aldol mechanism. The chain is Serine hydroxymethyltransferase from Streptococcus pneumoniae (strain Hungary19A-6).